Here is a 533-residue protein sequence, read N- to C-terminus: MDPVLKDEIEKRRTFAIISHPDAGKTTLTEKLLLKGGAIHEAGEIKARKADRFAMSDWMTMEKERGISVTSSVMKFPYRGYELNLLDTPGHRDFSEDTYRVLTAADSVIMVLDNASGVEQQTEKLMEVCRMQDTPIITFVNKMDRHGLPPLDILEDIEDTLDLDTVPLSWPIGMGNRFRGTYNLYRDELHLFSHADMDGEHERLPIDDLDDPQLDEVLGDQADDLRFDVELVREAGDELDLQAYLGGKQTPVFFGSALSNFGVGDMFDTFVEIAPPPQPRPTVTRDVSPYEDDFTGVAFKIQANMDPKHHDRMAFVRVCSGKFEKGMEVIHHRTGQTMRLNNATTFMAQDREGVDTAYPGDIIGIMSHGRVKIGDSFSTAEPLHFTGVPSFAPEHFRKVRLDDPFRSKHLSKGLQQLSEEGTIQAFRPLRGNDYILGAVGELQFDVTLDRLEDEYNVDAHLTGVRYACCRWIDGPAEDLEDFEAENMDSLFRDAGGDLAYLALSDFRLERTMENWPRISFNSTKQHTAEEERS.

Positions 10 to 278 (EKRRTFAIIS…TFVEIAPPPQ (269 aa)) constitute a tr-type G domain. GTP contacts are provided by residues 19 to 26 (SHPDAGKT), 87 to 91 (DTPGH), and 141 to 144 (NKMD).

Belongs to the TRAFAC class translation factor GTPase superfamily. Classic translation factor GTPase family. PrfC subfamily.

It is found in the cytoplasm. Increases the formation of ribosomal termination complexes and stimulates activities of RF-1 and RF-2. It binds guanine nucleotides and has strong preference for UGA stop codons. It may interact directly with the ribosome. The stimulation of RF-1 and RF-2 is significantly reduced by GTP and GDP, but not by GMP. In Salinibacter ruber (strain DSM 13855 / M31), this protein is Peptide chain release factor 3.